The following is a 75-amino-acid chain: Pi-hexatoxin-Hi1d (75 aa).

Disulfide bonds link C3-C18, C10-C23, C17-C33, C40-C55, C47-C60, and C54-C71. Domain repeat units follow at residues 3-33 and 40-71; these read CIRK…FEVC and CLVK…SSVC. The tract at residues 3-71 is 2 X approximate repeats with cysteine pattern C-C-CC-C-C; sequence CIRKWLSCVD…KRSGNKSSVC (69 aa).

The protein belongs to the psalmotoxin-1 family. Double-knot toxin subfamily. As to expression, expressed by the venom gland.

It localises to the secreted. This toxin potently and selectively inhibits ASIC1a, an isoform of the gene ASIC1. It incompletely inhibits ASIC1a activation in a pH-independent and slowly reversible manner. This toxin acts by binding to and stabilizing the closed state of the channel, thereby impeding the transition into a conducting state. This toxin may bind to the acidic pocket of ASIC1a, since mutation of a key residue of this pocket (Arg-350) abolishes the ability of the toxin to inhibit ASIC1a. In vivo, this toxin protects the brain from neuronal injury when administered up to 8 hours after stroke onset. This is Pi-hexatoxin-Hi1d from Hadronyche infensa (Fraser island funnel-web spider).